The following is a 271-amino-acid chain: 3-deoxy-manno-octulosonate cytidylyltransferase (271 aa).

The protein belongs to the KdsB family.

It is found in the cytoplasm. The catalysed reaction is 3-deoxy-alpha-D-manno-oct-2-ulosonate + CTP = CMP-3-deoxy-beta-D-manno-octulosonate + diphosphate. Its pathway is nucleotide-sugar biosynthesis; CMP-3-deoxy-D-manno-octulosonate biosynthesis; CMP-3-deoxy-D-manno-octulosonate from 3-deoxy-D-manno-octulosonate and CTP: step 1/1. It functions in the pathway bacterial outer membrane biogenesis; lipopolysaccharide biosynthesis. Activates KDO (a required 8-carbon sugar) for incorporation into bacterial lipopolysaccharide in Gram-negative bacteria. This Leptothrix cholodnii (strain ATCC 51168 / LMG 8142 / SP-6) (Leptothrix discophora (strain SP-6)) protein is 3-deoxy-manno-octulosonate cytidylyltransferase.